Here is a 211-residue protein sequence, read N- to C-terminus: Vascular-related unknown protein 1 (211 aa).

Over residues 1–12 (MMDTFSCNSYEQ) the composition is skewed to polar residues. A disordered region spans residues 1–40 (MMDTFSCNSYEQNHPHDDDIDIDAHDHDSHGGDHQEESGW). Residues 13–37 (NHPHDDDIDIDAHDHDSHGGDHQEE) show a composition bias toward basic and acidic residues.

Expressed in vascular tissues of cotyledons, rosette leaves, sepals, petals, anther filaments. Expressed in roots, inflorescence stems and developing seeds.

Its subcellular location is the cytoplasm. The protein localises to the nucleus. Involved in the regulation of xylem development and growth. May regulate secondary wall formation during vascular development by modulation of brassinosteroid, gibberellin and auxin hormone signaling pathways. This chain is Vascular-related unknown protein 1, found in Arabidopsis thaliana (Mouse-ear cress).